A 239-amino-acid chain; its full sequence is Adenylate kinase 2 (239 aa).

29–34 (GSGKGT) lines the ATP pocket. Positions 49-78 (STGDILRAIIASGSELGQKVQKITESGGLV) are NMP. AMP is bound by residues Thr50, Arg55, 76–78 (GLV), 104–107 (GFPR), and Gln111. The LID stretch occupies residues 145-182 (GRLFHLASGRSYHELFNPPKVPMVDDITGDRLVHRSDD). Residues Arg146 and 155–156 (SY) contribute to the ATP site. AMP-binding residues include Arg179 and Arg190.

Belongs to the adenylate kinase family. AK2 subfamily. In terms of assembly, monomer. The cofactor is Mg(2+).

It is found in the cytoplasm. The protein resides in the cytosol. The enzyme catalyses AMP + ATP = 2 ADP. The protein operates within purine metabolism; purine nucleotide biosynthesis. Its function is as follows. Catalyzes the reversible transfer of the terminal phosphate group between ATP and AMP. Plays an important role in cellular energy homeostasis and in adenine nucleotide metabolism. The polypeptide is Adenylate kinase 2 (Schistosoma mansoni (Blood fluke)).